Reading from the N-terminus, the 123-residue chain is Crossover junction endodeoxyribonuclease Hjc (123 aa).

E9 serves as a coordination point for Mg(2+). The active site involves S29. D33 and E46 together coordinate Mg(2+).

This sequence belongs to the Holliday junction resolvase Hjc family. In terms of assembly, homodimer. Probably interacts with PCNA and RadB. Mg(2+) is required as a cofactor. Requires Mn(2+) as cofactor.

The catalysed reaction is Endonucleolytic cleavage at a junction such as a reciprocal single-stranded crossover between two homologous DNA duplexes (Holliday junction).. Cleavage inhibited by RadB in the absence (but not presence) of ATP. Functionally, a structure-specific endonuclease that resolves Holliday junction (HJ) intermediates during genetic recombination. Cleaves 4-way DNA junctions introducing paired nicks in opposing strands, leaving a 5'-terminal phosphate and a 3'-terminal hydroxyl group that are subsequently ligated to produce recombinant products. Cleaves both mobile and immobile junctions. Binds 4-way junction DNA, a synthetic Hj, binding is not competed by dsDNA. The polypeptide is Crossover junction endodeoxyribonuclease Hjc (Pyrococcus furiosus (strain ATCC 43587 / DSM 3638 / JCM 8422 / Vc1)).